Consider the following 239-residue polypeptide: 2-C-methyl-D-erythritol 4-phosphate cytidylyltransferase (239 aa).

It belongs to the IspD/TarI cytidylyltransferase family. IspD subfamily.

It catalyses the reaction 2-C-methyl-D-erythritol 4-phosphate + CTP + H(+) = 4-CDP-2-C-methyl-D-erythritol + diphosphate. It functions in the pathway isoprenoid biosynthesis; isopentenyl diphosphate biosynthesis via DXP pathway; isopentenyl diphosphate from 1-deoxy-D-xylulose 5-phosphate: step 2/6. Catalyzes the formation of 4-diphosphocytidyl-2-C-methyl-D-erythritol from CTP and 2-C-methyl-D-erythritol 4-phosphate (MEP). The sequence is that of 2-C-methyl-D-erythritol 4-phosphate cytidylyltransferase from Acidobacterium capsulatum (strain ATCC 51196 / DSM 11244 / BCRC 80197 / JCM 7670 / NBRC 15755 / NCIMB 13165 / 161).